The primary structure comprises 460 residues: NADH-ubiquinone oxidoreductase chain 4 (460 aa).

Helical transmembrane passes span 20-42 (AKWLWTTSIAQSLVIALASLSWL), 61-81 (PLSTPLLVLTCWLLPLMVLAS), 94-113 (RTYISLLVSLQMFLILAFGA), 117-139 (IMFYIMFEATLLPTLIIITRWGN), 148-168 (TYFLFYTLAGSLPLLVALLLL), 195-215 (LWWAACLLAFLVKMPVYGVHL), 225-245 (PIAGSMILAAVLLKLGGYGMM), 258-278 (LAYPFIVLALWGIIMTGSICL), 285-304 (SLIAYSSVGHMGLVAGGILI), 308-330 (WGFTGAIILMIAHGLASSALFCL), 351-371 (MILPLMTTWWFVASLANLALP), 394-414 (LLLTGLGTLITASYSLYLFLM), and 436-456 (LLITLHLIPIILLILKPELMW).

Belongs to the complex I subunit 4 family.

It is found in the mitochondrion membrane. The enzyme catalyses a ubiquinone + NADH + 5 H(+)(in) = a ubiquinol + NAD(+) + 4 H(+)(out). In terms of biological role, core subunit of the mitochondrial membrane respiratory chain NADH dehydrogenase (Complex I) that is believed to belong to the minimal assembly required for catalysis. Complex I functions in the transfer of electrons from NADH to the respiratory chain. The immediate electron acceptor for the enzyme is believed to be ubiquinone. This is NADH-ubiquinone oxidoreductase chain 4 (MT-ND4) from Salmo salar (Atlantic salmon).